We begin with the raw amino-acid sequence, 207 residues long: Alpha/beta-tubulin-N-acetyltransferase 9 (207 aa).

Residues 35 to 180 (EELQRLTASE…QEVTLRLTVS (146 aa)) enclose the N-acetyltransferase domain.

The protein belongs to the acetyltransferase family. GNAT subfamily.

It carries out the reaction N-terminal L-methionyl-[tubulin] + acetyl-CoA = N-terminal N(alpha)-acetyl-L-methionyl-[tubulin] + CoA + H(+). Functionally, N-acetyltransferase that mediates the acetylation of the N-terminal residues of alpha- and beta-tubulin. This Homo sapiens (Human) protein is Alpha/beta-tubulin-N-acetyltransferase 9 (NAT9).